Here is a 93-residue protein sequence, read N- to C-terminus: Large ribosomal subunit protein uL23 (93 aa).

This sequence belongs to the universal ribosomal protein uL23 family. As to quaternary structure, part of the 50S ribosomal subunit. Contacts protein L29, and trigger factor when it is bound to the ribosome.

Its function is as follows. One of the early assembly proteins it binds 23S rRNA. One of the proteins that surrounds the polypeptide exit tunnel on the outside of the ribosome. Forms the main docking site for trigger factor binding to the ribosome. This chain is Large ribosomal subunit protein uL23, found in Natranaerobius thermophilus (strain ATCC BAA-1301 / DSM 18059 / JW/NM-WN-LF).